Reading from the N-terminus, the 188-residue chain is Elongation factor P (188 aa).

This sequence belongs to the elongation factor P family.

The protein localises to the cytoplasm. The protein operates within protein biosynthesis; polypeptide chain elongation. Functionally, involved in peptide bond synthesis. Stimulates efficient translation and peptide-bond synthesis on native or reconstituted 70S ribosomes in vitro. Probably functions indirectly by altering the affinity of the ribosome for aminoacyl-tRNA, thus increasing their reactivity as acceptors for peptidyl transferase. In Bradyrhizobium diazoefficiens (strain JCM 10833 / BCRC 13528 / IAM 13628 / NBRC 14792 / USDA 110), this protein is Elongation factor P.